A 493-amino-acid polypeptide reads, in one-letter code: High affinity nitrate transporter 2.7 (493 aa).

The span at 1–19 (MEPSQRNTKPPSFSDSTIP) shows a compositional bias: polar residues. The disordered stretch occupies residues 1-20 (MEPSQRNTKPPSFSDSTIPV). 12 helical membrane-spanning segments follow: residues 46 to 66 (WLSL…VPVI), 70 to 90 (LNLS…GSIF), 113 to 133 (FLTA…SFIL), 136 to 156 (FFVG…SSMF), 174 to 194 (VGAG…AEFL), 202 to 222 (VSFV…LLYG), 257 to 277 (FVEI…ALLY), 299 to 319 (FGVN…SNIA), 341 to 361 (LWGL…LGRV), 368 to 388 (ILVM…VFGV), 400 to 420 (VAGI…FLLF), and 431 to 451 (ISLM…IYFP).

It belongs to the major facilitator superfamily. Nitrate/nitrite porter (TC 2.A.1.8) family. In terms of tissue distribution, expressed in seeds, leaves and shoots. Lower expression in roots.

The protein resides in the vacuole membrane. In terms of biological role, involved in high-affinity nitrate transport. Controls nitrate content in seeds. This is High affinity nitrate transporter 2.7 (NRT2.7) from Arabidopsis thaliana (Mouse-ear cress).